A 290-amino-acid polypeptide reads, in one-letter code: ATP synthase gamma chain (290 aa).

It belongs to the ATPase gamma chain family. As to quaternary structure, F-type ATPases have 2 components, CF(1) - the catalytic core - and CF(0) - the membrane proton channel. CF(1) has five subunits: alpha(3), beta(3), gamma(1), delta(1), epsilon(1). CF(0) has three main subunits: a, b and c.

It localises to the cell inner membrane. In terms of biological role, produces ATP from ADP in the presence of a proton gradient across the membrane. The gamma chain is believed to be important in regulating ATPase activity and the flow of protons through the CF(0) complex. This Dinoroseobacter shibae (strain DSM 16493 / NCIMB 14021 / DFL 12) protein is ATP synthase gamma chain.